A 280-amino-acid chain; its full sequence is Ribosomal RNA small subunit methyltransferase A (280 aa).

Residues N18, L20, G45, E66, D89, and N110 each coordinate S-adenosyl-L-methionine.

Belongs to the class I-like SAM-binding methyltransferase superfamily. rRNA adenine N(6)-methyltransferase family. RsmA subfamily.

It is found in the cytoplasm. It carries out the reaction adenosine(1518)/adenosine(1519) in 16S rRNA + 4 S-adenosyl-L-methionine = N(6)-dimethyladenosine(1518)/N(6)-dimethyladenosine(1519) in 16S rRNA + 4 S-adenosyl-L-homocysteine + 4 H(+). Functionally, specifically dimethylates two adjacent adenosines (A1518 and A1519) in the loop of a conserved hairpin near the 3'-end of 16S rRNA in the 30S particle. May play a critical role in biogenesis of 30S subunits. The chain is Ribosomal RNA small subunit methyltransferase A from Cupriavidus necator (strain ATCC 17699 / DSM 428 / KCTC 22496 / NCIMB 10442 / H16 / Stanier 337) (Ralstonia eutropha).